Here is a 452-residue protein sequence, read N- to C-terminus: NADH-ubiquinone oxidoreductase chain 4 (452 aa).

14 consecutive transmembrane segments (helical) span residues L4 to W24, V29 to S49, F59 to S79, L88 to M110, L114 to G136, A144 to I164, V182 to V202, P221 to M241, M252 to I272, L282 to W304, A309 to Y331, L345 to A365, I390 to M410, and L432 to F452.

The protein belongs to the complex I subunit 4 family.

It localises to the mitochondrion membrane. The enzyme catalyses a ubiquinone + NADH + 5 H(+)(in) = a ubiquinol + NAD(+) + 4 H(+)(out). Core subunit of the mitochondrial membrane respiratory chain NADH dehydrogenase (Complex I) that is believed to belong to the minimal assembly required for catalysis. Complex I functions in the transfer of electrons from NADH to the respiratory chain. The immediate electron acceptor for the enzyme is believed to be ubiquinone. The polypeptide is NADH-ubiquinone oxidoreductase chain 4 (ND4) (Branchiostoma floridae (Florida lancelet)).